We begin with the raw amino-acid sequence, 162 residues long: Phenazine biosynthesis protein PhzA2 (162 aa).

It belongs to the PhzA/PhzB family.

It functions in the pathway antibiotic biosynthesis; phenazine biosynthesis. Involved in the biosynthesis of the antibiotic phenazine, a nitrogen-containing heterocyclic molecule having important roles in virulence, competition and biological control. PhzA2 (operon phzA2B2C2E2F2G2) has a role in the biosynthesis of the phenazine during both planktonic growth and biofilm development, and in host infection during biofilm development. The protein is Phenazine biosynthesis protein PhzA2 of Pseudomonas aeruginosa (strain ATCC 15692 / DSM 22644 / CIP 104116 / JCM 14847 / LMG 12228 / 1C / PRS 101 / PAO1).